The chain runs to 120 residues: UPF0102 protein PST_1070 (120 aa).

Belongs to the UPF0102 family.

This Stutzerimonas stutzeri (strain A1501) (Pseudomonas stutzeri) protein is UPF0102 protein PST_1070.